Reading from the N-terminus, the 274-residue chain is 2,3,4,5-tetrahydropyridine-2,6-dicarboxylate N-succinyltransferase (274 aa).

Belongs to the transferase hexapeptide repeat family.

It localises to the cytoplasm. It catalyses the reaction (S)-2,3,4,5-tetrahydrodipicolinate + succinyl-CoA + H2O = (S)-2-succinylamino-6-oxoheptanedioate + CoA. The protein operates within amino-acid biosynthesis; L-lysine biosynthesis via DAP pathway; LL-2,6-diaminopimelate from (S)-tetrahydrodipicolinate (succinylase route): step 1/3. The sequence is that of 2,3,4,5-tetrahydropyridine-2,6-dicarboxylate N-succinyltransferase from Yersinia pseudotuberculosis serotype IB (strain PB1/+).